The following is a 241-amino-acid chain: Sugar fermentation stimulation protein homolog (241 aa).

It belongs to the SfsA family.

This Yersinia enterocolitica serotype O:8 / biotype 1B (strain NCTC 13174 / 8081) protein is Sugar fermentation stimulation protein homolog.